Here is a 181-residue protein sequence, read N- to C-terminus: Probable inactive acireductone dioxygenase 2 (181 aa).

The protein belongs to the acireductone dioxygenase (ARD) family.

It is found in the cytoplasm. The protein localises to the nucleus. Its function is as follows. Probable inactive acireductone dioxygenase. This is Probable inactive acireductone dioxygenase 2 from Sorghum bicolor (Sorghum).